The chain runs to 386 residues: Citrate synthase (386 aa).

Active-site residues include His-266 and Asp-322.

The protein belongs to the citrate synthase family.

It carries out the reaction oxaloacetate + acetyl-CoA + H2O = citrate + CoA + H(+). It participates in carbohydrate metabolism; tricarboxylic acid cycle; isocitrate from oxaloacetate: step 1/2. This Acidithiobacillus ferridurans protein is Citrate synthase (gltA).